We begin with the raw amino-acid sequence, 216 residues long: Orotate phosphoribosyltransferase (216 aa).

Lys30 lines the 5-phospho-alpha-D-ribose 1-diphosphate pocket. 38–39 (FF) contacts orotate. 5-phospho-alpha-D-ribose 1-diphosphate is bound by residues 75–76 (YK), Arg102, Lys103, Lys106, His108, and 128–136 (DDVITAGTA). Thr132 and Arg160 together coordinate orotate.

It belongs to the purine/pyrimidine phosphoribosyltransferase family. PyrE subfamily. As to quaternary structure, homodimer. The cofactor is Mg(2+).

It carries out the reaction orotidine 5'-phosphate + diphosphate = orotate + 5-phospho-alpha-D-ribose 1-diphosphate. It functions in the pathway pyrimidine metabolism; UMP biosynthesis via de novo pathway; UMP from orotate: step 1/2. Catalyzes the transfer of a ribosyl phosphate group from 5-phosphoribose 1-diphosphate to orotate, leading to the formation of orotidine monophosphate (OMP). This chain is Orotate phosphoribosyltransferase, found in Acinetobacter baumannii (strain ATCC 17978 / DSM 105126 / CIP 53.77 / LMG 1025 / NCDC KC755 / 5377).